The sequence spans 372 residues: Alpha-1,3-mannosyl-glycoprotein 4-beta-N-acetylglucosaminyltransferase-like protein MGAT4D (372 aa).

Residues 1–8 (MKTKNVNL) lie on the Cytoplasmic side of the membrane. The chain crosses the membrane as a helical; Signal-anchor for type II membrane protein span at residues 9–29 (LFALVAVLLFGFSCFCISRMN). Residues 30–372 (QTNNQLINCR…REQHLKDHYY (343 aa)) lie on the Lumenal side of the membrane. Residues N54 and N143 are each glycosylated (N-linked (GlcNAc...) asparagine).

Belongs to the glycosyltransferase 54 family. In terms of assembly, may self-associate; specifically in the endoplasmic reticulum prior to its translocation to the Golgi. Interacts with MGAT1, MGAT3 and MAN2A2; may interact with MGTA1 specifically in the Golgi. N-glycosylated. O-glycosylated; further modified with terminal sialic acid residues. Testis.

It is found in the golgi apparatus membrane. Its subcellular location is the endoplasmic reticulum membrane. Its function is as follows. May play a role in male spermatogenesis. In vitro acts as inhibitor of MGAT1 activity causing cell surface proteins to carry mainly high mannose N-glycans. The function is mediated by its lumenal domain and occurs specifically in the Golgi. A catalytic glucosyltransferase activity is not detected. May be involved in regulation of Sertoli-germ cell interactions during specific stages of spermatogenesis. The polypeptide is Alpha-1,3-mannosyl-glycoprotein 4-beta-N-acetylglucosaminyltransferase-like protein MGAT4D (Rattus norvegicus (Rat)).